The primary structure comprises 162 residues: Small ribosomal subunit protein uS19 (162 aa).

Over residues 1 to 27 the composition is skewed to basic residues; that stretch reads MAKQKKFSGKGSARSKRKQNRKQVGPR. The disordered stretch occupies residues 1-29; sequence MAKQKKFSGKGSARSKRKQNRKQVGPRRR.

This sequence belongs to the universal ribosomal protein uS19 family.

In terms of biological role, protein S19 forms a complex with S13 that binds strongly to the 16S ribosomal RNA. The polypeptide is Small ribosomal subunit protein uS19 (Methanococcus aeolicus (strain ATCC BAA-1280 / DSM 17508 / OCM 812 / Nankai-3)).